The sequence spans 344 residues: N-acetyl-gamma-glutamyl-phosphate reductase 1 (344 aa).

Residue Cys-150 is part of the active site.

This sequence belongs to the NAGSA dehydrogenase family. Type 1 subfamily.

The protein resides in the cytoplasm. It carries out the reaction N-acetyl-L-glutamate 5-semialdehyde + phosphate + NADP(+) = N-acetyl-L-glutamyl 5-phosphate + NADPH + H(+). It functions in the pathway amino-acid biosynthesis; L-arginine biosynthesis; N(2)-acetyl-L-ornithine from L-glutamate: step 3/4. In terms of biological role, catalyzes the NADPH-dependent reduction of N-acetyl-5-glutamyl phosphate to yield N-acetyl-L-glutamate 5-semialdehyde. The polypeptide is N-acetyl-gamma-glutamyl-phosphate reductase 1 (Pseudomonas putida (strain ATCC 47054 / DSM 6125 / CFBP 8728 / NCIMB 11950 / KT2440)).